Here is a 261-residue protein sequence, read N- to C-terminus: 7beta-hydroxysteroid dehydrogenase (261 aa).

NADP(+) is bound by residues 17-21, 40-41, and 66-67; these read TEGIG, RR, and DL. Y156 serves as the catalytic Proton acceptor.

The protein belongs to the short-chain dehydrogenases/reductases (SDR) family. As to quaternary structure, homodimer.

The catalysed reaction is a 7beta-hydroxysteroid + NADP(+) = a 7-oxosteroid + NADPH + H(+). It carries out the reaction ursocholate + NADP(+) = 3alpha,12alpha-dihydroxy-7-oxo-5beta-cholanate + NADPH + H(+). It catalyses the reaction 7-oxolithocholate + NADPH + H(+) = ursodeoxycholate + NADP(+). The enzyme catalyses 3alpha,7beta-dihydroxy-12-oxo-5beta-cholan-24-oate + NADP(+) = 7,12-dioxo-lithocholate + NADPH + H(+). The catalysed reaction is 7beta-hydroxy-3,12-dioxo-5beta-cholan-24-oate + NADP(+) = dehydrocholate + NADPH + H(+). Functionally, 7beta-hydroxysteroid dehydrogenase that catalyzes the reduction of the 7-oxo group of 7-oxosteroids, such as 3alpha,12alpha-dihydroxy-7-oxo-5beta-cholanate, 7-oxolithocholate, 7,12-dioxo-lithocholate and dehydrocholate, to the corresponding 7beta-hydroxysteroids. Is also able to catalyze the reverse oxidation reactions. Together with 7alpha-HSDH encoded in the adjacent gene, is likely involved in the epimerization of the hydroxy group at C-7 of primary bile acids through 7-keto bile acid intermediates. This Clostridium sardiniense (Clostridium absonum) protein is 7beta-hydroxysteroid dehydrogenase.